The primary structure comprises 520 residues: tRNA-2-methylthio-N(6)-dimethylallyladenosine synthase (520 aa).

The region spanning 77–195 (KKFLIRTYGC…LPHLLRDAIF (119 aa)) is the MTTase N-terminal domain. [4Fe-4S] cluster is bound by residues C86, C122, C156, C232, C236, and C239. The 231-residue stretch at 218–448 (RKNKTQAWVN…ALVNDISNKR (231 aa)) folds into the Radical SAM core domain. The 64-residue stretch at 450-513 (LDYQDKIVEV…TWSLDGEIVS (64 aa)) folds into the TRAM domain.

It belongs to the methylthiotransferase family. MiaB subfamily. As to quaternary structure, monomer. Requires [4Fe-4S] cluster as cofactor.

Its subcellular location is the cytoplasm. It catalyses the reaction N(6)-dimethylallyladenosine(37) in tRNA + (sulfur carrier)-SH + AH2 + 2 S-adenosyl-L-methionine = 2-methylsulfanyl-N(6)-dimethylallyladenosine(37) in tRNA + (sulfur carrier)-H + 5'-deoxyadenosine + L-methionine + A + S-adenosyl-L-homocysteine + 2 H(+). Functionally, catalyzes the methylthiolation of N6-(dimethylallyl)adenosine (i(6)A), leading to the formation of 2-methylthio-N6-(dimethylallyl)adenosine (ms(2)i(6)A) at position 37 in tRNAs that read codons beginning with uridine. The protein is tRNA-2-methylthio-N(6)-dimethylallyladenosine synthase of Shouchella clausii (strain KSM-K16) (Alkalihalobacillus clausii).